Here is a 458-residue protein sequence, read N- to C-terminus: Phosphoglucosamine mutase (458 aa).

The Phosphoserine intermediate role is filled by S106. Residues S106, D247, D249, and D251 each coordinate Mg(2+). S106 bears the Phosphoserine mark.

Belongs to the phosphohexose mutase family. Mg(2+) serves as cofactor. Activated by phosphorylation.

The enzyme catalyses alpha-D-glucosamine 1-phosphate = D-glucosamine 6-phosphate. In terms of biological role, catalyzes the conversion of glucosamine-6-phosphate to glucosamine-1-phosphate. The polypeptide is Phosphoglucosamine mutase (Chlamydia pneumoniae (Chlamydophila pneumoniae)).